The following is a 1174-amino-acid chain: Probable pyruvate-flavodoxin oxidoreductase (1174 aa).

2 consecutive 4Fe-4S ferredoxin-type domains span residues 680–709 (EIPI…AKVV) and 736–765 (YVLQ…NPEI). Residues cysteine 689, cysteine 692, cysteine 695, cysteine 699, cysteine 745, cysteine 748, cysteine 751, cysteine 755, cysteine 819, cysteine 822, cysteine 847, and cysteine 1071 each contribute to the [4Fe-4S] cluster site.

It belongs to the pyruvate:ferredoxin/flavodoxin oxidoreductase family. It depends on [4Fe-4S] cluster as a cofactor.

The enzyme catalyses oxidized [flavodoxin] + pyruvate + CoA + 2 H(+) = reduced [flavodoxin] + acetyl-CoA + CO2. In terms of biological role, oxidoreductase required for the transfer of electrons from pyruvate to flavodoxin. The chain is Probable pyruvate-flavodoxin oxidoreductase (ydbK) from Escherichia coli (strain K12).